A 112-amino-acid polypeptide reads, in one-letter code: Tetracenomycin-F1 monooxygenase (112 aa).

Residues 11–100 (FTLVNVFGVA…SRPKPIFCEV (90 aa)) enclose the ABM domain.

As to quaternary structure, homotrimer.

It carries out the reaction tetracenomycin F1 + O2 = tetracenomycin D3 + H2O + H(+). It participates in antibiotic biosynthesis; tetracenomycin C biosynthesis. Its activity is regulated as follows. Inhibited by p-chloromercuribenzoic acid, N-ethylmaleimide and diethyl pyrocarbonate. Its function is as follows. Oxygenase required for conversion of tetracenomycin F1 to tetracenomycin D3. The polypeptide is Tetracenomycin-F1 monooxygenase (tcmH) (Streptomyces glaucescens).